A 517-amino-acid polypeptide reads, in one-letter code: Protein IQ-DOMAIN 13 (517 aa).

A calmodulin-binding region spans residues 1 to 11 (MGKKGSWFSAI). Disordered regions lie at residues 1–60 (MGKK…FLPI) and 81–147 (VFRP…PRAV). Positions 40 to 49 (KKKKGFGKKL) are enriched in basic residues. Residues 89 to 99 (DRANSSSTSVA) show a composition bias toward polar residues. Residues 134–144 (PKPPSPKPPSP) are compositionally biased toward pro residues. IQ domains lie at 168–196 (KNAYAIKIQAAFRGYMARRSFRALKGLVR) and 197–218 (LQGVVRGHSVKRQTMNAMKYMQ). 2 disordered regions span residues 324 to 407 (QPFR…LTSC) and 425 to 452 (KLRANSNPKERMDRTPVSTNEKRRSSFP). The segment covering 328-342 (LTPTRPSLSPQPQSS) has biased composition (low complexity). The span at 343 to 367 (NQNHFRLNNSFDTSTPNSSKSTFVT) shows a compositional bias: polar residues. A compositionally biased stretch (basic and acidic residues) spans 432 to 448 (PKERMDRTPVSTNEKRR).

Belongs to the IQD family. As to quaternary structure, binds to multiple calmodulin (CaM) in the presence of Ca(2+) and CaM-like proteins. In terms of tissue distribution, expressed in vessels of roots, cotyledons and leaves, as well as in trichomes.

It is found in the cell membrane. It localises to the cytoplasm. Its subcellular location is the cytoskeleton. In terms of biological role, may be involved in cooperative interactions with calmodulins or calmodulin-like proteins. Recruits calmodulin proteins to microtubules, thus being a potential scaffold in cellular signaling and trafficking. Regulates the formation of oval xylem secondary cell-wall deposition pits through microtubule-dependent lateral inhibition of Rho GTPase domains, thus confining the area of active ROP domains within the lattice of the cortical microtubules. May associate with nucleic acids and regulate gene expression at the transcriptional or post-transcriptional level. The sequence is that of Protein IQ-DOMAIN 13 from Arabidopsis thaliana (Mouse-ear cress).